A 324-amino-acid polypeptide reads, in one-letter code: Beta-ketoacyl-[acyl-carrier-protein] synthase III (324 aa).

Catalysis depends on residues Cys-114 and His-246. Residues Gln-247 to Arg-251 form an ACP-binding region. Asn-276 is an active-site residue.

It belongs to the thiolase-like superfamily. FabH family. In terms of assembly, homodimer.

It localises to the cytoplasm. It carries out the reaction malonyl-[ACP] + acetyl-CoA + H(+) = 3-oxobutanoyl-[ACP] + CO2 + CoA. The protein operates within lipid metabolism; fatty acid biosynthesis. Its function is as follows. Catalyzes the condensation reaction of fatty acid synthesis by the addition to an acyl acceptor of two carbons from malonyl-ACP. Catalyzes the first condensation reaction which initiates fatty acid synthesis and may therefore play a role in governing the total rate of fatty acid production. Possesses both acetoacetyl-ACP synthase and acetyl transacylase activities. Its substrate specificity determines the biosynthesis of branched-chain and/or straight-chain of fatty acids. This chain is Beta-ketoacyl-[acyl-carrier-protein] synthase III, found in Campylobacter jejuni (strain RM1221).